We begin with the raw amino-acid sequence, 229 residues long: MTLAKPGSGSQSRMDDKAHFKSRVIRDRATFAEEELGSSDVSDPAMVAAVETLLRGIGEDPQREGLRKTPERVVAALKFLTSGYRQSLEELLNSAIFDEGHDEMVLLRDVSLFSLCEHHLLPFIGKAHVAYIPKQKVVGLSKIARIVEMYSRRLQVQERLTRQIAEALMEVLDPYGVGVVIEATHMCMVMRGVQKAGSWTVTSSMVGVFQEDPRTREEFLSLIRHPSNF.

Residues 1–21 (MTLAKPGSGSQSRMDDKAHFK) are disordered. Residues C116, H119, and C187 each contribute to the Zn(2+) site.

It belongs to the GTP cyclohydrolase I family. As to quaternary structure, toroid-shaped homodecamer, composed of two pentamers of five dimers.

The enzyme catalyses GTP + H2O = 7,8-dihydroneopterin 3'-triphosphate + formate + H(+). Its pathway is cofactor biosynthesis; 7,8-dihydroneopterin triphosphate biosynthesis; 7,8-dihydroneopterin triphosphate from GTP: step 1/1. In Synechococcus sp. (strain JA-2-3B'a(2-13)) (Cyanobacteria bacterium Yellowstone B-Prime), this protein is GTP cyclohydrolase 1.